The sequence spans 472 residues: Poly(A) polymerase catalytic subunit (472 aa).

Active-site residues include D194 and D196.

The protein belongs to the poxviridae poly(A) polymerase catalytic subunit family. As to quaternary structure, heterodimer of a large (catalytic) subunit and a small (regulatory) subunit.

The enzyme catalyses RNA(n) + ATP = RNA(n)-3'-adenine ribonucleotide + diphosphate. Functionally, polymerase that creates the 3'-poly(A) tail of mRNA's. This Serinus (CNPV) protein is Poly(A) polymerase catalytic subunit (PAPL).